Here is a 482-residue protein sequence, read N- to C-terminus: Bile acid receptor (482 aa).

K132 is covalently cross-linked (Glycyl lysine isopeptide (Lys-Gly) (interchain with G-Cter in SUMO1)). The segment at residues 134-209 (DELCVVCGDR…MGMLAECLLT (76 aa)) is a DNA-binding region (nuclear receptor). The NR C4-type zinc-finger motif lies at 137–157 (CVVCGDRASGYHYNALTCEGC). Phosphoserine; by PKC/PRKCA occurs at positions 145 and 164. At K167 the chain carries N6-acetyllysine; by EP300. The NR C4-type zinc-finger motif lies at 173 to 197 (CKNGGNCVMDMYMRRKCQECRLRKC). An N6-methyllysine; by SETD7 modification is found at K216. Position 223 is an N6-acetyllysine; by EP300 (K223). The segment covering 229–240 (AIHEDSEGRDLR) has biased composition (basic and acidic residues). The interval 229–253 (AIHEDSEGRDLRQVTSTTKSCREKT) is disordered. Residues 258 to 482 (DQQNLLHYIM…PLLCEIWDVQ (225 aa)) enclose the NR LBD domain. K285 is covalently cross-linked (Glycyl lysine isopeptide (Lys-Gly) (interchain with G-Cter in SUMO1)). Chenodeoxycholate contacts are provided by R341, Y371, and Y379. T452 is modified (phosphothreonine; by PKC/PRKCZ). Residue H457 participates in chenodeoxycholate binding.

It belongs to the nuclear hormone receptor family. NR1 subfamily. In terms of assembly, heterodimer with RXRA; the heterodimerization enhances the binding affinity for LXXLL motifs from coactivators. Binds DNA predominantly as a heterodimer with RXRA. After activation by agonist binding interacts with coactivators. Interacts with NCOA1, NCOA2, PPARGC1A, CARM1, SETD7, PRMT1, GPS2, SMARCA4 and MED1, EP300 and SMARCD1. Interacts with XRCC5 and XRCC6; decreasing NR1H4/FXR transactivation activity towards ABCB11/BSEP. Interacts with PAGR1 AND NCOA6; indicative for an association with an MLL2/MLL3 complex (ASCOM). Post-translationally, acetylated by EP300. Lys-223 as is the major acetylation site for EP300; the dynamicly regulated acetylation inhibits heterodimerization with RXRA and transactivation activity. Deacetylated by SIRT1. Methylation may increase transactivation of target genes. In terms of processing, phosphorylation by PKC/PRKCA increases transactivation activity by promoting association with PPARGC1A. Post-translationally, sumoylated upon ligand binding.

The protein resides in the nucleus. Its function is as follows. Ligand-activated transcription factor. Receptor for bile acids (BAs) such as chenodeoxycholic acid (CDCA), lithocholic acid, deoxycholic acid (DCA) and allocholic acid (ACA). Plays a essential role in BA homeostasis through the regulation of genes involved in BA synthesis, conjugation and enterohepatic circulation. Also regulates lipid and glucose homeostasis and is involved innate immune response. The FXR-RXR heterodimer binds predominantly to farnesoid X receptor response elements (FXREs) containing two inverted repeats of the consensus sequence 5'-AGGTCA-3' in which the monomers are spaced by 1 nucleotide (IR-1) but also to tandem repeat DR1 sites with lower affinity, and can be activated by either FXR or RXR-specific ligands. It is proposed that monomeric nuclear receptors such as NR5A2/LRH-1 bound to coregulatory nuclear responsive element (NRE) halfsites located in close proximity to FXREs modulate transcriptional activity. In the liver activates transcription of the corepressor NR0B2 thereby indirectly inhibiting CYP7A1 and CYP8B1 (involved in BA synthesis) implicating at least in part histone demethylase KDM1A resulting in epigenomic repression, and SLC10A1/NTCP (involved in hepatic uptake of conjugated BAs). Activates transcription of the repressor MAFG (involved in regulation of BA synthesis). Activates transcription of SLC27A5/BACS and BAAT (involved in BA conjugation), ABCB11/BSEP (involved in bile salt export) by directly recruiting histone methyltransferase CARM1, and ABCC2/MRP2 (involved in secretion of conjugated BAs) and ABCB4 (involved in secretion of phosphatidylcholine in the small intestine). Activates transcription of SLC27A5/BACS and BAAT (involved in BA conjugation), ABCB11/BSEP (involved in bile salt export) by directly recruiting histone methyltransferase CARM1, and ABCC2/MRP2 (involved in secretion of conjugated BAs) and ABCB4 (involved in secretion of phosphatidylcholine in the small intestine). In the intestine activates FGF19 expression and secretion leading to hepatic CYP7A1 repression. The function also involves the coordinated induction of hepatic KLB/beta-klotho expression. Regulates transcription of liver UGT2B4 and SULT2A1 involved in BA detoxification; binding to the UGT2B4 promoter seems to imply a monomeric transactivation independent of RXRA. Modulates lipid homeostasis by activating liver NR0B2/SHP-mediated repression of SREBF1 (involved in de novo lipogenesis), expression of PLTP (involved in HDL formation), SCARB1 (involved in HDL hepatic uptake), APOE, APOC1, APOC4, PPARA (involved in beta-oxidation of fatty acids), VLDLR and SDC1 (involved in the hepatic uptake of LDL and IDL remnants), and inhibiting expression of MTTP (involved in VLDL assembly). Increases expression of APOC2 (promoting lipoprotein lipase activity implicated in triglyceride clearance). Transrepresses APOA1 involving a monomeric competition with NR2A1 for binding to a DR1 element. Also reduces triglyceride clearance by inhibiting expression of ANGPTL3 and APOC3 (both involved in inhibition of lipoprotein lipase). Involved in glucose homeostasis by modulating hepatic gluconeogenesis through activation of NR0B2/SHP-mediated repression of respective genes. Modulates glycogen synthesis (inducing phosphorylation of glycogen synthase kinase-3). Modulates glucose-stimulated insulin secretion and is involved in insulin resistance. Involved in intestinal innate immunity. Plays a role in protecting the distal small intestine against bacterial overgrowth and preservation of the epithelial barrier. Down-regulates inflammatory cytokine expression in several types of immune cells including macrophages and mononuclear cells. Mediates trans-repression of TLR4-induced cytokine expression; the function seems to require its sumoylation and prevents N-CoR nuclear receptor corepressor clearance from target genes such as IL1B and NOS2. Involved in the TLR9-mediated protective mechanism in intestinal inflammation. Plays an anti-inflammatory role in liver inflammation; proposed to inhibit pro-inflammatory (but not antiapoptotic) NF-kappa-B signaling. This Bos taurus (Bovine) protein is Bile acid receptor (NR1H4).